We begin with the raw amino-acid sequence, 665 residues long: DNA ligase (665 aa).

NAD(+)-binding positions include 35 to 39, 88 to 89, and Glu-117; these read DAIYD and SL. Catalysis depends on Lys-119, which acts as the N6-AMP-lysine intermediate. The NAD(+) site is built by Arg-140, Glu-174, Lys-290, and Lys-314. 4 residues coordinate Zn(2+): Cys-406, Cys-409, Cys-424, and Cys-429. The region spanning 588 to 665 is the BRCT domain; the sequence is KKTERFAQLS…EEAFNELLVS (78 aa).

Belongs to the NAD-dependent DNA ligase family. LigA subfamily. Requires Mg(2+) as cofactor. The cofactor is Mn(2+).

It carries out the reaction NAD(+) + (deoxyribonucleotide)n-3'-hydroxyl + 5'-phospho-(deoxyribonucleotide)m = (deoxyribonucleotide)n+m + AMP + beta-nicotinamide D-nucleotide.. DNA ligase that catalyzes the formation of phosphodiester linkages between 5'-phosphoryl and 3'-hydroxyl groups in double-stranded DNA using NAD as a coenzyme and as the energy source for the reaction. It is essential for DNA replication and repair of damaged DNA. This Metamycoplasma arthritidis (strain 158L3-1) (Mycoplasma arthritidis) protein is DNA ligase.